A 347-amino-acid polypeptide reads, in one-letter code: Mitochondrial glycine transporter (347 aa).

3 Solcar repeats span residues 18 to 102, 138 to 222, and 247 to 331; these read SKPT…LRTA, LSHT…SKRS, and STAS…LIMW. 6 consecutive transmembrane segments (helical) span residues 24-49, 77-103, 144-169, 197-220, 251-277, and 306-324; these read FAAG…TRVQ, GTLP…RTAV, LITG…VRYE, GFGA…EQSK, INFI…KTRV, and GLGL…AWTV.

This sequence belongs to the mitochondrial carrier (TC 2.A.29) family. SLC25A38 subfamily.

It is found in the mitochondrion inner membrane. The enzyme catalyses glycine(in) = glycine(out). Its function is as follows. Mitochondrial glycine transporter that imports glycine into the mitochondrial matrix. Plays an important role in providing glycine for the first enzymatic step in heme biosynthesis, the condensation of glycine with succinyl-CoA to produce 5-aminolevulinate (ALA) in the mitochondrial matrix. This Coccidioides immitis (strain RS) (Valley fever fungus) protein is Mitochondrial glycine transporter.